A 315-amino-acid chain; its full sequence is Methionyl-tRNA formyltransferase (315 aa).

111 to 114 (SLLP) contacts (6S)-5,6,7,8-tetrahydrofolate.

The protein belongs to the Fmt family.

The enzyme catalyses L-methionyl-tRNA(fMet) + (6R)-10-formyltetrahydrofolate = N-formyl-L-methionyl-tRNA(fMet) + (6S)-5,6,7,8-tetrahydrofolate + H(+). In terms of biological role, attaches a formyl group to the free amino group of methionyl-tRNA(fMet). The formyl group appears to play a dual role in the initiator identity of N-formylmethionyl-tRNA by promoting its recognition by IF2 and preventing the misappropriation of this tRNA by the elongation apparatus. The polypeptide is Methionyl-tRNA formyltransferase (Chlorobium phaeobacteroides (strain DSM 266 / SMG 266 / 2430)).